The following is a 199-amino-acid chain: Tumor protein p53-inducible nuclear protein 2 (199 aa).

Positions 26–41 (VSEEDEVDGWLIIDLQ) match the LIR motif. Disordered regions lie at residues 41-69 (QDSY…LMDE), 117-153 (LESG…LHHA), and 173-199 (LQRA…ARES). The segment covering 47-64 (PPDPRASPAPAGRPPPAP) has biased composition (pro residues). A Phosphoserine modification is found at S136.

Interacts with VMP1, GABARAP, GABARAPL1, GABARAPL2, MAP1LC3A, MAP1LC3B, MAP1LC3C and THRA. In terms of tissue distribution, abundantly expressed in skeletal muscle and heart and expression is highly repressed in muscle from obese diabetic rats.

Its subcellular location is the cytoplasm. It is found in the cytosol. The protein resides in the nucleus. The protein localises to the PML body. It localises to the cytoplasmic vesicle. Its subcellular location is the autophagosome. In terms of biological role, dual regulator of transcription and autophagy. Positively regulates autophagy and is required for autophagosome formation and processing. May act as a scaffold protein that recruits MAP1LC3A, GABARAP and GABARAPL2 and brings them to the autophagosome membrane by interacting with VMP1 where, in cooperation with the BECN1-PI3-kinase class III complex, they trigger autophagosome development. Acts as a transcriptional activator of THRA. The protein is Tumor protein p53-inducible nuclear protein 2 (Tp53inp2) of Rattus norvegicus (Rat).